Consider the following 382-residue polypeptide: Solvent efflux pump periplasmic linker SrpA (382 aa).

An N-terminal signal peptide occupies residues 1–23 (MRQIRSPRALRVIPLTALMLISG). C24 is lipidated: N-palmitoyl cysteine. The S-diacylglycerol cysteine moiety is linked to residue C24. Residues 98 to 127 (RTYEAQLRRAEANRTSAQNLARRYETLLKT) are a coiled coil.

It belongs to the membrane fusion protein (MFP) (TC 8.A.1) family.

It localises to the cell inner membrane. Functionally, the periplasmic linker protein component of an organic solvent efflux pump. Involved in export of a number of low log POW compounds including hexane (log POW 3.5), toluene (log POW 2.5) and dimethylphthalate (log POW 2.3). The solvent resistance phenotype has been postulated to depend on the operon expression level. This chain is Solvent efflux pump periplasmic linker SrpA (srpA), found in Pseudomonas putida (Arthrobacter siderocapsulatus).